The chain runs to 172 residues: Large ribosomal subunit protein uL10 (172 aa).

This sequence belongs to the universal ribosomal protein uL10 family. As to quaternary structure, part of the ribosomal stalk of the 50S ribosomal subunit. The N-terminus interacts with L11 and the large rRNA to form the base of the stalk. The C-terminus forms an elongated spine to which L12 dimers bind in a sequential fashion forming a multimeric L10(L12)X complex.

In terms of biological role, forms part of the ribosomal stalk, playing a central role in the interaction of the ribosome with GTP-bound translation factors. This chain is Large ribosomal subunit protein uL10, found in Brucella suis (strain ATCC 23445 / NCTC 10510).